A 199-amino-acid polypeptide reads, in one-letter code: Phosphatidylethanolamine N-methyltransferase (199 aa).

The Lumenal segment spans residues 1 to 12 (MTRLLGYVDPLD). The segment at residues 13-33 (PSFVAAVITITFNPLYWNVVA) is an intramembrane region (helical). At 34–45 (RWEHKTRKLSRA) the chain is on the lumenal side. A helical transmembrane segment spans residues 46-66 (FGSPYLACYSLSVTILLLNFL). At 67–93 (RSHCFTQAMLSQPRMESLDTPAAYSLG) the chain is on the cytoplasmic side. Residues 94-114 (LALLGLGVVLVLSSFFALGFA) form a helical membrane-spanning segment. 98 to 100 (GLG) is a binding site for S-adenosyl-L-methionine. At 115–157 (GTFLGDYFGILKEARVTVFPFNILDNPMYWGSTANYLGWAIMH) the chain is on the lumenal side. A helical membrane pass occupies residues 158–178 (ASPTGLLLTVLVALTYIVALL). The Cytoplasmic segment spans residues 179–199 (YEEPFTAEIYRQKASGSHKRS). 180–181 (EE) contributes to the S-adenosyl-L-methionine binding site.

Belongs to the class VI-like SAM-binding methyltransferase superfamily. PEMT/PEM2 methyltransferase family. In terms of processing, isoform 2 is N-glycosylated with high-mannose oligosaccharides. In terms of tissue distribution, primarily expressed in liver (at protein level).

Its subcellular location is the endoplasmic reticulum. It localises to the endoplasmic reticulum membrane. The protein resides in the mitochondrion membrane. The enzyme catalyses a 1,2-diacyl-sn-glycero-3-phospho-N-methylethanolamine + S-adenosyl-L-methionine = a 1,2-diacyl-sn-glycero-3-phospho-N,N-dimethylethanolamine + S-adenosyl-L-homocysteine + H(+). The catalysed reaction is a 1,2-diacyl-sn-glycero-3-phospho-N,N-dimethylethanolamine + S-adenosyl-L-methionine = a 1,2-diacyl-sn-glycero-3-phosphocholine + S-adenosyl-L-homocysteine + H(+). It catalyses the reaction a 1,2-diacyl-sn-glycero-3-phosphoethanolamine + S-adenosyl-L-methionine = a 1,2-diacyl-sn-glycero-3-phospho-N-methylethanolamine + S-adenosyl-L-homocysteine + H(+). It carries out the reaction 1,2-di-(9Z-octadecenoyl)-sn-glycero-3-phosphoethanolamine + S-adenosyl-L-methionine = 1,2-di-(9Z-octadecenoyl)-sn-glycero-3-phospho-N-methylethanolamine + S-adenosyl-L-homocysteine + H(+). The enzyme catalyses 1,2-di-(9Z-octadecenoyl)-sn-glycero-3-phospho-N-methylethanolamine + S-adenosyl-L-methionine = 1,2-di-(9Z-octadecenoyl)-sn-glycero-3-phospho-N,N-dimethylethanolamine + S-adenosyl-L-homocysteine + H(+). The catalysed reaction is 1,2-di-(9Z-octadecenoyl)-sn-glycero-3-phospho-N,N-dimethylethanolamine + S-adenosyl-L-methionine = 1,2-di-(9Z-octadecenoyl)-sn-glycero-3-phosphocholine + S-adenosyl-L-homocysteine + H(+). It catalyses the reaction 1,2-di-(9Z,12Z-octadecadienoyl)-sn-glycero-3-phosphoethanolamine + S-adenosyl-L-methionine = 1,2-di-(9Z,12Z-octadecadienoyl)-sn-glycero-3-phospho-N-methylethanolamine + S-adenosyl-L-homocysteine + H(+). It carries out the reaction 1,2-di-(9Z,12Z-octadecadienoyl)-sn-glycero-3-phospho-N-methylethanolamine + S-adenosyl-L-methionine = 1,2-di-(9Z,12Z-octadecadienoyl)-sn-glycero-3-phospho-N,N-dimethylethanolamine + S-adenosyl-L-homocysteine + H(+). The enzyme catalyses 1,2-di-(9Z,12Z-octadecadienoyl)-sn-glycero-3-phospho-N,N-dimethylethanolamine + S-adenosyl-L-methionine = 1,2-di-(9Z,12Z-octadecadienoyl)-sn-glycero-3-phosphocholine + S-adenosyl-L-homocysteine + H(+). The catalysed reaction is 1,2-di-(9Z,12Z,15Z-octadecatrienoyl)-sn-glycero-3-phosphoethanolamine + S-adenosyl-L-methionine = 1,2-di-(9Z,12Z,15Z-octadecatrienoyl)-sn-glycero-3-phospho-N-methylethanolamine + S-adenosyl-L-homocysteine + H(+). It catalyses the reaction 1,2-di-(9Z,12Z,15Z-octadecatrienoyl)-sn-glycero-3-phospho-N-methylethanolamine + S-adenosyl-L-methionine = 1,2-di-(9Z,12Z,15Z-octadecatrienoyl)-sn-glycero-3-phospho-N,N-dimethylethanolamine + S-adenosyl-L-homocysteine + H(+). It carries out the reaction 1,2-di-(9Z,12Z,15Z-octadecatrienoyl)-sn-glycero-3-phospho-N,N-dimethylethanolamine + S-adenosyl-L-methionine = 1,2-di-(9Z,12Z,15Z-octadecatrienoyl)-sn-glycero-3-phosphocholine + S-adenosyl-L-homocysteine + H(+). The enzyme catalyses 1-hexadecanoyl-2-(4Z,7Z,10Z,13Z,16Z,19Z-docosahexaenoyl)-sn-glycero-3-phosphoethanolamine + S-adenosyl-L-methionine = 1-hexadecanoyl-2-(4Z,7Z,10Z,13Z,16Z,19Z-docosahexaenoyl)-sn-glycero-3-phospho-N-methylethanolamine + S-adenosyl-L-homocysteine + H(+). The catalysed reaction is 1-hexadecanoyl-2-(4Z,7Z,10Z,13Z,16Z,19Z-docosahexaenoyl)-sn-glycero-3-phospho-N-methylethanolamine + S-adenosyl-L-methionine = 1-hexadecanoyl-2-(4Z,7Z,10Z,13Z,16Z,19Z-docosahexaenoyl)-sn-glycero-3-phospho-N,N-dimethylethanolamine + S-adenosyl-L-homocysteine + H(+). It catalyses the reaction 1-hexadecanoyl-2-(4Z,7Z,10Z,13Z,16Z,19Z-docosahexaenoyl)-sn-glycero-3-phospho-N,N-dimethylethanolamine + S-adenosyl-L-methionine = 1-hexadecanoyl-2-(4Z,7Z,10Z,13Z,16Z,19Z-docosahexaenoyl)-sn-glycero-3-phosphocholine + S-adenosyl-L-homocysteine + H(+). Its pathway is phospholipid metabolism; phosphatidylcholine biosynthesis. With respect to regulation, the first methylation is rate-limiting. Catalyzes the three sequential steps of the methylation pathway for the biosynthesis of phosphatidylcholine, a critical and essential component for membrane structure. Uses S-adenosylmethionine (S-adenosyl-L-methionine, SAM or AdoMet) as the methyl group donor for the methylation of phosphatidylethanolamine (1,2-diacyl-sn-glycero-3-phosphoethanolamine, PE) to phosphatidylmonomethylethanolamine (1,2-diacyl-sn-glycero-3-phospho-N-methylethanolamine, PMME), PMME to phosphatidyldimethylethanolamine (1,2-diacyl-sn-glycero-3-phospho-N,N-dimethylethanolamine, PDME), and PDME to phosphatidylcholine (1,2-diacyl-sn-glycero-3-phosphocholine, PC), producing S-adenosyl-L-homocysteine in each step. Responsible for approximately 30% of hepatic PC with the CDP-choline pathway accounting for the other 70%. Its function is as follows. Catalyzes the three sequential steps of the methylation of 1,2-diacyl-sn-glycero-3-phospho-N-methylethanolamine (PMME) to 1,2-diacyl-sn-glycero-3-phospho-N,N-dimethylethanolamine (PDME) more efficiently than isoform 2. Induces increase in PC species with longer polyunsaturated chains than isoform 2. Functionally, produces a higher increase in the level of PC species containing long chains with three double bonds than isoform 1. The chain is Phosphatidylethanolamine N-methyltransferase from Homo sapiens (Human).